Reading from the N-terminus, the 433-residue chain is Enolase (433 aa).

A (2R)-2-phosphoglycerate-binding site is contributed by Gln164. Catalysis depends on Glu206, which acts as the Proton donor. Asp243, Glu289, and Asp316 together coordinate Mg(2+). Positions 341, 370, 371, and 392 each coordinate (2R)-2-phosphoglycerate. The Proton acceptor role is filled by Lys341.

It belongs to the enolase family. Mg(2+) is required as a cofactor.

It localises to the cytoplasm. It is found in the secreted. Its subcellular location is the cell surface. The catalysed reaction is (2R)-2-phosphoglycerate = phosphoenolpyruvate + H2O. It participates in carbohydrate degradation; glycolysis; pyruvate from D-glyceraldehyde 3-phosphate: step 4/5. Its function is as follows. Catalyzes the reversible conversion of 2-phosphoglycerate (2-PG) into phosphoenolpyruvate (PEP). It is essential for the degradation of carbohydrates via glycolysis. The chain is Enolase from Borreliella burgdorferi (strain ATCC 35210 / DSM 4680 / CIP 102532 / B31) (Borrelia burgdorferi).